The following is a 317-amino-acid chain: NADH kinase (317 aa).

Belongs to the NAD kinase family. As to quaternary structure, homodimer. Ubiquitous.

Its subcellular location is the cytoplasm. It carries out the reaction NADH + ATP = ADP + NADPH + H(+). Two-fold decrease in activity in the presence of PPi, iodoacetate or para-chloromercuribenzoate. Phosphorylates specifically NADH. Can phosphorylate NAD with a 100-fold decrease in efficiency compared to NADH. Prefers ATP as nucleoside triphosphate substrate. Can also utilize UTP, GTP and CTP. Key source of the cellular reductant NADPH which is an important antioxidant factor. This chain is NADH kinase (NADK3), found in Arabidopsis thaliana (Mouse-ear cress).